The sequence spans 634 residues: Chaperone protein HtpG (634 aa).

Residues 1 to 342 (MSVETQKETL…SNDLSLNVSR (342 aa)) form an a; substrate-binding region. The segment at 343–559 (EILQKDPIID…EQDLGLQMRQ (217 aa)) is b. Positions 560–634 (ILEASGQKVP…LNKLLVELSV (75 aa)) are c.

Belongs to the heat shock protein 90 family. As to quaternary structure, homodimer.

It localises to the cytoplasm. Its function is as follows. Molecular chaperone. Has ATPase activity. The chain is Chaperone protein HtpG from Pseudomonas fluorescens (strain ATCC BAA-477 / NRRL B-23932 / Pf-5).